The chain runs to 204 residues: Serotype 3 fimbrial subunit (204 aa).

Residues 1–25 (MSKFSYPALRAALILAASPVLPALA) form the signal peptide. C41 and C84 are joined by a disulfide.

This sequence belongs to the fimbrial protein family.

It localises to the fimbrium. In terms of biological role, bordetella pertussis is the causative agent of whooping cough. An essential step in the disease process is the attachment of the bacteria to the ciliated epithelium of the respiratory tract, enabling the organism to resist normal host-clearance mechanisms. It is unclear which bacterial cell surface component are responsible for adherence but the fimbriae of B.pertussis are prime candidates for being involved in this process. This Bordetella pertussis (strain Tohama I / ATCC BAA-589 / NCTC 13251) protein is Serotype 3 fimbrial subunit (fim3).